The following is a 2176-amino-acid chain: Nipped-B-like protein scc-2 (2176 aa).

A compositionally biased stretch (polar residues) spans methionine 1–alanine 25. Disordered regions lie at residues methionine 1 to glycine 27, proline 150 to serine 170, serine 464 to glycine 483, methionine 495 to lysine 514, tyrosine 523 to aspartate 551, glutamine 585 to arginine 615, and aspartate 669 to glutamate 708. Residues serine 464–threonine 473 show a composition bias toward low complexity. 2 stretches are compositionally biased toward basic and acidic residues: residues glutamate 597–arginine 615 and serine 685–glutamate 695. Residues asparagine 696 to glutamate 708 are compositionally biased toward acidic residues. 7 HEAT repeats span residues aspartate 1280–alanine 1312, glutamate 1320–tyrosine 1351, glutamate 1353–lysine 1388, glutamate 1393–glutamine 1426, glutamate 1692–glutamine 1723, glutamine 1803–glutamine 1834, and glycine 1840–lysine 1871. The tract at residues isoleucine 2149–histidine 2176 is disordered. The span at aspartate 2154 to glycine 2163 shows a compositional bias: acidic residues.

The protein belongs to the SCC2/Nipped-B family. As to quaternary structure, may heterodimerize with mau-2/SCC4 to form the cohesin loading complex.

It is found in the nucleus. The protein resides in the chromosome. In terms of biological role, plays an important role in the loading of the cohesin complex on to meiotic chromosomes. Forms a heterodimeric complex (also known as cohesin loading complex) with mau-2/SCC4 which mediates the loading of the cohesin complex onto chromatin. Plays an essential role in cell division during embryonic development. Promotes normal chromosome organization during meiosis. Required for the assembly of the synaptonemal complex between homologous chromosomes to promote sister chromatid cohesion during meiosis. Required for chromosome segregation during mitosis and meiosis. Plays a role in DNA double-strand break (DSB) repair during meiotic recombination and promotes the assembly of the 9-1-1 cell-cycle checkpoint response complex which is required for inducing apoptosis in response to DNA damage, at DNA damage sites. This chain is Nipped-B-like protein scc-2, found in Caenorhabditis elegans.